The chain runs to 168 residues: uncharacterized protein (168 aa).

2 consecutive transmembrane segments (helical) span residues 27–47 and 147–167; these read NWLV…RISG and IENG…QVMF.

It is found in the membrane. This is an uncharacterized protein from Saccharomyces cerevisiae (strain ATCC 204508 / S288c) (Baker's yeast).